A 161-amino-acid polypeptide reads, in one-letter code: Allophycocyanin beta chain (161 aa).

N71 is modified (N4-methylasparagine). Residue C81 coordinates (2R,3E)-phycocyanobilin.

It belongs to the phycobiliprotein family. In terms of assembly, heterodimer of an alpha and a beta chain. Contains one covalently linked phycocyanobilin chromophore.

Its subcellular location is the cellular thylakoid membrane. Its function is as follows. Light-harvesting photosynthetic bile pigment-protein from the phycobiliprotein complex. Allophycocyanin has a maximum absorption at approximately 650 nanometers. This is Allophycocyanin beta chain (apcB) from Anabaena variabilis.